A 150-amino-acid polypeptide reads, in one-letter code: Troponin C, isoform 1 (150 aa).

Residue Met-1 is modified to N-acetylmethionine. EF-hand domains lie at 7–42 (DQVQ…MGVK), 43–78 (ISDR…FLSE), 83–118 (ALKK…LDNK), and 119–150 (LTED…MMNG). Residues Asp-56, Asp-58, Ser-60, Glu-62, and Glu-67 each contribute to the Ca(2+) site. Asp-132, Asp-134, Ser-136, Thr-138, and Glu-143 together coordinate Ca(2+).

This sequence belongs to the troponin C family.

Troponin is the central regulatory protein of striated muscle contraction. Tn consists of three components: Tn-I which is the inhibitor of actomyosin ATPase, Tn-T which contains the binding site for tropomyosin and Tn-C. The binding of calcium to Tn-C abolishes the inhibitory action of Tn on actin filaments. The polypeptide is Troponin C, isoform 1 (Homarus americanus (American lobster)).